The primary structure comprises 106 residues: UPF0145 protein GSU2791 (106 aa).

It belongs to the UPF0145 family.

The sequence is that of UPF0145 protein GSU2791 from Geobacter sulfurreducens (strain ATCC 51573 / DSM 12127 / PCA).